A 504-amino-acid chain; its full sequence is AMP phosphorylase 1 (504 aa).

Residues glycine 169, 195-200 (SRAITS), and threonine 204 contribute to the AMP site. Aspartate 257 functions as the Proton donor in the catalytic mechanism. Serine 265 and lysine 289 together coordinate AMP.

It belongs to the thymidine/pyrimidine-nucleoside phosphorylase family. Type 2 subfamily.

It carries out the reaction AMP + phosphate = alpha-D-ribose 1,5-bisphosphate + adenine. The enzyme catalyses CMP + phosphate = cytosine + alpha-D-ribose 1,5-bisphosphate. The catalysed reaction is UMP + phosphate = alpha-D-ribose 1,5-bisphosphate + uracil. Catalyzes the conversion of AMP and phosphate to adenine and ribose 1,5-bisphosphate (R15P). Exhibits phosphorylase activity toward CMP and UMP in addition to AMP. Functions in an archaeal AMP degradation pathway, together with R15P isomerase and RubisCO. The sequence is that of AMP phosphorylase 1 from Archaeoglobus fulgidus (strain ATCC 49558 / DSM 4304 / JCM 9628 / NBRC 100126 / VC-16).